We begin with the raw amino-acid sequence, 22 residues long: Unknown protein 10 (22 aa).

In Pseudotsuga menziesii (Douglas-fir), this protein is Unknown protein 10.